The sequence spans 445 residues: Proline--tRNA ligase (445 aa).

This sequence belongs to the class-II aminoacyl-tRNA synthetase family. ProS type 2 subfamily. As to quaternary structure, homodimer.

The protein localises to the cytoplasm. It catalyses the reaction tRNA(Pro) + L-proline + ATP = L-prolyl-tRNA(Pro) + AMP + diphosphate. Functionally, catalyzes the attachment of proline to tRNA(Pro) in a two-step reaction: proline is first activated by ATP to form Pro-AMP and then transferred to the acceptor end of tRNA(Pro). The protein is Proline--tRNA ligase of Dinoroseobacter shibae (strain DSM 16493 / NCIMB 14021 / DFL 12).